The following is a 114-amino-acid chain: UPF0102 protein jhp_0762 (114 aa).

The protein belongs to the UPF0102 family.

The protein is UPF0102 protein jhp_0762 of Helicobacter pylori (strain J99 / ATCC 700824) (Campylobacter pylori J99).